The following is a 503-amino-acid chain: ATP synthase subunit alpha (503 aa).

169-176 (GDRSTGKT) is a binding site for ATP.

This sequence belongs to the ATPase alpha/beta chains family. As to quaternary structure, F-type ATPases have 2 components, CF(1) - the catalytic core - and CF(0) - the membrane proton channel. CF(1) has five subunits: alpha(3), beta(3), gamma(1), delta(1), epsilon(1). CF(0) has three main subunits: a(1), b(2) and c(9-12). The alpha and beta chains form an alternating ring which encloses part of the gamma chain. CF(1) is attached to CF(0) by a central stalk formed by the gamma and epsilon chains, while a peripheral stalk is formed by the delta and b chains.

The protein resides in the cell membrane. It catalyses the reaction ATP + H2O + 4 H(+)(in) = ADP + phosphate + 5 H(+)(out). Its function is as follows. Produces ATP from ADP in the presence of a proton gradient across the membrane. The alpha chain is a regulatory subunit. This chain is ATP synthase subunit alpha, found in Dehalococcoides mccartyi (strain ATCC BAA-2266 / KCTC 15142 / 195) (Dehalococcoides ethenogenes (strain 195)).